Consider the following 444-residue polypeptide: Adenylosuccinate synthetase (444 aa).

Residues 12-18 (GDEGKGK) and 40-42 (GHT) contribute to the GTP site. The active-site Proton acceptor is the aspartate 13. Residues aspartate 13 and glycine 40 each coordinate Mg(2+). IMP is bound by residues 13–16 (DEGK), 38–41 (NAGH), threonine 128, arginine 142, glutamine 223, threonine 238, and arginine 302. Histidine 41 (proton donor) is an active-site residue. Residue 298–304 (TTTGRRR) coordinates substrate. Residues arginine 304, 330-332 (KLD), and 412-414 (SLG) contribute to the GTP site.

The protein belongs to the adenylosuccinate synthetase family. As to quaternary structure, homodimer. Mg(2+) is required as a cofactor.

The protein localises to the cytoplasm. The enzyme catalyses IMP + L-aspartate + GTP = N(6)-(1,2-dicarboxyethyl)-AMP + GDP + phosphate + 2 H(+). The protein operates within purine metabolism; AMP biosynthesis via de novo pathway; AMP from IMP: step 1/2. Functionally, plays an important role in the de novo pathway of purine nucleotide biosynthesis. Catalyzes the first committed step in the biosynthesis of AMP from IMP. The protein is Adenylosuccinate synthetase of Synechococcus elongatus (strain ATCC 33912 / PCC 7942 / FACHB-805) (Anacystis nidulans R2).